The following is a 244-amino-acid chain: Osmotin-like protein OSM34 (244 aa).

Positions 1-22 (MANLLVSTFIFSALLLISTATA) are cleaved as a signal peptide. Disulfide bonds link cysteine 31/cysteine 222, cysteine 72/cysteine 82, cysteine 87/cysteine 93, cysteine 138/cysteine 212, cysteine 143/cysteine 195, cysteine 151/cysteine 161, cysteine 165/cysteine 174, and cysteine 175/cysteine 182.

The protein belongs to the thaumatin family.

The sequence is that of Osmotin-like protein OSM34 (OSM34) from Arabidopsis thaliana (Mouse-ear cress).